Here is a 341-residue protein sequence, read N- to C-terminus: tRNA N6-adenosine threonylcarbamoyltransferase (341 aa).

Positions 111 and 115 each coordinate Fe cation. Substrate contacts are provided by residues 134–138 (LVSGG), Asp-167, Gly-180, and Asn-276. Residue Asp-304 participates in Fe cation binding.

The protein belongs to the KAE1 / TsaD family. Requires Fe(2+) as cofactor.

The protein resides in the cytoplasm. It carries out the reaction L-threonylcarbamoyladenylate + adenosine(37) in tRNA = N(6)-L-threonylcarbamoyladenosine(37) in tRNA + AMP + H(+). Functionally, required for the formation of a threonylcarbamoyl group on adenosine at position 37 (t(6)A37) in tRNAs that read codons beginning with adenine. Is involved in the transfer of the threonylcarbamoyl moiety of threonylcarbamoyl-AMP (TC-AMP) to the N6 group of A37, together with TsaE and TsaB. TsaD likely plays a direct catalytic role in this reaction. The chain is tRNA N6-adenosine threonylcarbamoyltransferase from Pseudomonas aeruginosa (strain UCBPP-PA14).